Here is a 142-residue protein sequence, read N- to C-terminus: Large ribosomal subunit protein uL13 (142 aa).

The protein belongs to the universal ribosomal protein uL13 family. In terms of assembly, part of the 50S ribosomal subunit.

Its function is as follows. This protein is one of the early assembly proteins of the 50S ribosomal subunit, although it is not seen to bind rRNA by itself. It is important during the early stages of 50S assembly. The chain is Large ribosomal subunit protein uL13 from Pasteurella multocida (strain Pm70).